Here is a 212-residue protein sequence, read N- to C-terminus: Uridine kinase (212 aa).

Position 13–20 (13–20) interacts with ATP; the sequence is GASASGKS.

It belongs to the uridine kinase family.

The protein resides in the cytoplasm. It catalyses the reaction uridine + ATP = UMP + ADP + H(+). The catalysed reaction is cytidine + ATP = CMP + ADP + H(+). It participates in pyrimidine metabolism; CTP biosynthesis via salvage pathway; CTP from cytidine: step 1/3. Its pathway is pyrimidine metabolism; UMP biosynthesis via salvage pathway; UMP from uridine: step 1/1. This is Uridine kinase from Shewanella frigidimarina (strain NCIMB 400).